A 194-amino-acid chain; its full sequence is Probable nicotinate-nucleotide adenylyltransferase (194 aa).

It belongs to the NadD family.

It carries out the reaction nicotinate beta-D-ribonucleotide + ATP + H(+) = deamido-NAD(+) + diphosphate. It participates in cofactor biosynthesis; NAD(+) biosynthesis; deamido-NAD(+) from nicotinate D-ribonucleotide: step 1/1. In terms of biological role, catalyzes the reversible adenylation of nicotinate mononucleotide (NaMN) to nicotinic acid adenine dinucleotide (NaAD). This Brucella suis biovar 1 (strain 1330) protein is Probable nicotinate-nucleotide adenylyltransferase.